The chain runs to 776 residues: Serine/threonine-protein kinase SIK1 (776 aa).

The region spanning 27 to 278 (YDVERTLGKG…IAQIRQHRWM (252 aa)) is the Protein kinase domain. ATP-binding positions include 33–41 (LGKGNFAVV) and Lys-56. The active-site Proton acceptor is the Asp-149. Thr-182 carries the phosphothreonine; by LKB1 and GSK3-beta modification. Position 186 is a phosphoserine; by autocatalysis (Ser-186). Residues 303 to 343 (DYNEQVLGIMQALGIDRQRTVESLQNSSYNHFAAIYYLLLE) form the UBA domain. Thr-322 is subject to Phosphothreonine; by CaMK1. 2 disordered regions span residues 350–371 (STQPSSRATPAPARQPQLRNSD) and 449–472 (EARQGPSLEEEQEVQEPLPGSTGR). Ser-577 is subject to Phosphoserine; by PKA. Residues 586–612 (KAFRQQLRKNARTKGFLGLNKIKGLAR) form an RK-rich region region. Residues 621-643 (GSRGGMSTFHTPAPSSGLQGCTA) form a disordered region. Polar residues predominate over residues 628 to 643 (TFHTPAPSSGLQGCTA).

Belongs to the protein kinase superfamily. CAMK Ser/Thr protein kinase family. AMPK subfamily. Interacts (when phosphorylated on Thr-182 and Ser-186) with YWHAZ. Interacts with ATP1A1. Mg(2+) serves as cofactor. Post-translationally, phosphorylated at Thr-182 by STK11/LKB1 in complex with STE20-related adapter-alpha (STRADA) pseudo kinase and CAB39, leading to its activation. Phosphorylation at Thr-182 promotes autophosphorylation at Ser-186, which is required for sustained activity. Autophosphorylation at Ser-186 is maintained by sequential phosphorylation at Thr-182 by GSK3-beta. GSK3-beta cannot initiate phosphorylation at Thr-182, it can only maintain it. Phosphorylation at Ser-577 by PKA promotes translocation to the cytoplasm. Phosphorylation at Thr-322 by CaMK1 following intracellular sodium concentration leads to activation.

The protein resides in the cytoplasm. It localises to the nucleus. It carries out the reaction L-seryl-[protein] + ATP = O-phospho-L-seryl-[protein] + ADP + H(+). It catalyses the reaction L-threonyl-[protein] + ATP = O-phospho-L-threonyl-[protein] + ADP + H(+). With respect to regulation, activated by phosphorylation on Thr-182. Also activated by phosphorylation on Thr-322 in response to increases in intracellular sodium in parallel with elevations in intracellular calcium through the reversible sodium/calcium exchanger. In terms of biological role, serine/threonine-protein kinase involved in various processes such as cell cycle regulation, gluconeogenesis and lipogenesis regulation, muscle growth and differentiation and tumor suppression. Phosphorylates HDAC4, HDAC5, PPME1, SREBF1, CRTC1/TORC1 and CRTC2/TORC2. Acts as a tumor suppressor and plays a key role in p53/TP53-dependent anoikis, a type of apoptosis triggered by cell detachment: required for phosphorylation of p53/TP53 in response to loss of adhesion and is able to suppress metastasis. Part of a sodium-sensing signaling network, probably by mediating phosphorylation of PPME1: following increases in intracellular sodium, SIK1 is activated by CaMK1 and phosphorylates PPME1 subunit of protein phosphatase 2A (PP2A), leading to dephosphorylation of sodium/potassium-transporting ATPase ATP1A1 and subsequent increase activity of ATP1A1. Acts as a regulator of muscle cells by phosphorylating and inhibiting class II histone deacetylases HDAC4 and HDAC5, leading to promote expression of MEF2 target genes in myocytes. Also required during cardiomyogenesis by regulating the exit of cardiomyoblasts from the cell cycle via down-regulation of CDKN1C/p57Kip2. Acts as a regulator of hepatic gluconeogenesis by phosphorylating and repressing the CREB-specific coactivators CRTC1/TORC1 and CRTC2/TORC2, leading to inhibit CREB activity. Also regulates hepatic lipogenesis by phosphorylating and inhibiting SREBF1. In concert with CRTC1/TORC1, regulates the light-induced entrainment of the circadian clock by attenuating PER1 induction; represses CREB-mediated transcription of PER1 by phosphorylating and deactivating CRTC1/TORC1. In Rattus norvegicus (Rat), this protein is Serine/threonine-protein kinase SIK1 (Sik1).